We begin with the raw amino-acid sequence, 589 residues long: Malto-oligosyltrehalose trehalohydrolase (589 aa).

256–261 provides a ligand contact to substrate; the sequence is GFDAVH. The active-site Nucleophile is D258. E295 acts as the Proton donor in catalysis. Substrate is bound by residues 320-324 and 390-395; these read DDFHT and HDQIGN.

It belongs to the glycosyl hydrolase 13 family.

It is found in the cytoplasm. The catalysed reaction is hydrolysis of (1-&gt;4)-alpha-D-glucosidic linkage in 4-alpha-D-[(1-&gt;4)-alpha-D-glucanosyl]n trehalose to yield trehalose and (1-&gt;4)-alpha-D-glucan.. It participates in glycan biosynthesis; trehalose biosynthesis. The chain is Malto-oligosyltrehalose trehalohydrolase (treZ) from Brevibacterium helvolum.